A 395-amino-acid polypeptide reads, in one-letter code: ATP phosphoribosyltransferase regulatory subunit (395 aa).

It belongs to the class-II aminoacyl-tRNA synthetase family. HisZ subfamily. In terms of assembly, heteromultimer composed of HisG and HisZ subunits.

It localises to the cytoplasm. The protein operates within amino-acid biosynthesis; L-histidine biosynthesis; L-histidine from 5-phospho-alpha-D-ribose 1-diphosphate: step 1/9. Its function is as follows. Required for the first step of histidine biosynthesis. May allow the feedback regulation of ATP phosphoribosyltransferase activity by histidine. The protein is ATP phosphoribosyltransferase regulatory subunit of Pseudomonas fluorescens (strain ATCC BAA-477 / NRRL B-23932 / Pf-5).